The chain runs to 800 residues: Ion-translocating oxidoreductase complex subunit C (800 aa).

4Fe-4S ferredoxin-type domains follow at residues 367–398 (DEFS…QQLY) and 408–437 (KARG…VQYY). The [4Fe-4S] cluster site is built by cysteine 378, cysteine 381, cysteine 384, cysteine 388, cysteine 417, cysteine 420, cysteine 423, and cysteine 427. Composition is skewed to low complexity over residues 536–553 (GATP…APAP), 571–583 (AKQA…PAAT), 599–617 (AAIA…APAA), 647–667 (AKQA…ADPA), and 675–690 (AAIA…KQAA). Disordered stretches follow at residues 536 to 558 (GATP…DDPR), 571 to 631 (AKQA…QDDP), and 647 to 706 (AKQA…ENTD). Positions 693–705 (HATTEPVTVQENT) are enriched in polar residues.

This sequence belongs to the 4Fe4S bacterial-type ferredoxin family. RnfC subfamily. In terms of assembly, the complex is composed of six subunits: RnfA, RnfB, RnfC, RnfD, RnfE and RnfG. The cofactor is [4Fe-4S] cluster.

Its subcellular location is the cell inner membrane. In terms of biological role, part of a membrane-bound complex that couples electron transfer with translocation of ions across the membrane. This is Ion-translocating oxidoreductase complex subunit C from Edwardsiella ictaluri (strain 93-146).